The following is a 288-amino-acid chain: Homoserine kinase (288 aa).

78–88 provides a ligand contact to ATP; the sequence is PLARGLGSSSS.

It belongs to the GHMP kinase family. Homoserine kinase subfamily.

It localises to the cytoplasm. The catalysed reaction is L-homoserine + ATP = O-phospho-L-homoserine + ADP + H(+). It participates in amino-acid biosynthesis; L-threonine biosynthesis; L-threonine from L-aspartate: step 4/5. Catalyzes the ATP-dependent phosphorylation of L-homoserine to L-homoserine phosphate. The sequence is that of Homoserine kinase from Streptococcus agalactiae serotype III (strain NEM316).